The following is a 380-amino-acid chain: Dynactin subunit 2 (380 aa).

The disordered stretch occupies residues methionine 1–aspartate 32. The segment covering glutamate 21–aspartate 32 has biased composition (acidic residues). Phosphoserine occurs at positions 49, 58, and 86. Coiled coils occupy residues valine 100–aspartate 135 and glutamate 353–serine 377.

The protein belongs to the dynactin subunit 2 family. Subunit of dynactin, a multiprotein complex associated with dynein.

It localises to the cytoplasm. The protein localises to the cytoskeleton. It is found in the membrane. Functionally, modulates cytoplasmic dynein binding to an organelle, and plays a role in prometaphase chromosome alignment and spindle organization during mitosis. May play a role in synapse formation during brain development. The protein is Dynactin subunit 2 of Drosophila melanogaster (Fruit fly).